Here is a 335-residue protein sequence, read N- to C-terminus: Methionine import ATP-binding protein MetN (335 aa).

Residues 2–241 (IQFQRLHKSY…PQHPTTRRFV (240 aa)) enclose the ABC transporter domain. ATP is bound at residue 38–45 (GHSGAGKS).

The protein belongs to the ABC transporter superfamily. Methionine importer (TC 3.A.1.24) family. The complex is composed of two ATP-binding proteins (MetN), two transmembrane proteins (MetI) and a solute-binding protein (MetQ).

The protein resides in the cell inner membrane. The catalysed reaction is L-methionine(out) + ATP + H2O = L-methionine(in) + ADP + phosphate + H(+). It carries out the reaction D-methionine(out) + ATP + H2O = D-methionine(in) + ADP + phosphate + H(+). In terms of biological role, part of the ABC transporter complex MetNIQ involved in methionine import. Responsible for energy coupling to the transport system. This Xanthomonas campestris pv. campestris (strain 8004) protein is Methionine import ATP-binding protein MetN.